A 587-amino-acid polypeptide reads, in one-letter code: Thiol:disulfide interchange protein DsbD 2 (587 aa).

A signal peptide spans 1 to 18; that stretch reads MRVLILLLMLLLPGLSQA. Topologically, residues 19-172 are periplasmic; the sequence is QPGDDLFAPR…SLQAGNLAWS (154 aa). Intrachain disulfides connect Cys-124–Cys-130 and Cys-188–Cys-308. A helical membrane pass occupies residues 173–193; sequence LLLFFGLGLLLAFAPCSLPML. The Cytoplasmic portion of the chain corresponds to 194–216; the sequence is PILAGLVVGSGAGPRRGLLLAGS. The chain crosses the membrane as a helical span at residues 217–237; it reads YVLSMALVYAGLGVVAALLGG. Over 238 to 246 the chain is Periplasmic; sequence NLQAWLQQP. A helical transmembrane segment spans residues 247–267; sequence WLLGSFAALFVFLALPMFGFF. The Cytoplasmic portion of the chain corresponds to 268-299; sequence ELQLPAALRDRLDGLSRGRKGGSLAGAAALGA. Residues 300 to 320 form a helical membrane-spanning segment; sequence LSGLLVGPCMTAPLAGALLYI. Topologically, residues 321–330 are periplasmic; that stretch reads AQTGNALHGG. Residues 331–351 form a helical membrane-spanning segment; it reads LVLFSLGLGIGMPLLLLVTVG. The Cytoplasmic portion of the chain corresponds to 352–360; it reads SRFLPKPGP. A helical membrane pass occupies residues 361-381; it reads WMNLVKGVFGFLFLGTAWILL. At 382–383 the chain is on the periplasmic side; the sequence is RP. Residues 384–404 form a helical membrane-spanning segment; that stretch reads LLGEALWIGLGGALLLVLAYA. The Cytoplasmic portion of the chain corresponds to 405 to 416; the sequence is ALHTARGLARHA. Residues 417 to 437 traverse the membrane as a helical segment; that stretch reads VLFGAAGCIFGLWGAAMLLGA. Topologically, residues 438–587 are periplasmic; it reads AAGADDPWRP…AHWQATRERG (150 aa). The Thioredoxin domain maps to 448-585; sequence LQVYAAANRG…FLAHWQATRE (138 aa). A disulfide bond links Cys-500 and Cys-503.

The protein belongs to the thioredoxin family. DsbD subfamily.

The protein localises to the cell inner membrane. It catalyses the reaction [protein]-dithiol + NAD(+) = [protein]-disulfide + NADH + H(+). It carries out the reaction [protein]-dithiol + NADP(+) = [protein]-disulfide + NADPH + H(+). In terms of biological role, required to facilitate the formation of correct disulfide bonds in some periplasmic proteins and for the assembly of the periplasmic c-type cytochromes. Acts by transferring electrons from cytoplasmic thioredoxin to the periplasm. This transfer involves a cascade of disulfide bond formation and reduction steps. The polypeptide is Thiol:disulfide interchange protein DsbD 2 (Pseudomonas aeruginosa (strain ATCC 15692 / DSM 22644 / CIP 104116 / JCM 14847 / LMG 12228 / 1C / PRS 101 / PAO1)).